Reading from the N-terminus, the 130-residue chain is Glycoprotein hormone alpha-2 (130 aa).

A signal peptide spans Met1–Gly22. 4 disulfides stabilise this stretch: Cys32–Cys90, Cys49–Cys104, Cys58–Cys120, and Cys62–Cys122. Residues Asn38 and Asn82 are each glycosylated (N-linked (GlcNAc...) asparagine).

It belongs to the glycoprotein hormones subunit alpha family. As to quaternary structure, heterodimer with GPHB5; this heterodimer interacts with thyroid-stimulating hormone receptor (TSHR), and hence stimulates cAMP production.

The protein localises to the secreted. Functionally, functions as a heterodimeric glycoprotein hormone with GPHB5 able to bind and activate the thyroid-stimulating hormone receptor (TSHR), leading to increased cAMP production. Plays a central role in controlling thyroid cell metabolism. This Rattus norvegicus (Rat) protein is Glycoprotein hormone alpha-2 (Gpha2).